The following is a 483-amino-acid chain: Endoplasmic reticulum lectin 1 (483 aa).

Positions 1–33 (MEEGGGGVRSLVPGGPVLLVLCGLLEASGGGRA) are cleaved as a signal peptide. MRH domains are found at residues 111-246 (SSCS…LCSH) and 342-469 (SYCF…ICKI). C113 and C126 form a disulfide bridge. A glycan (N-linked (GlcNAc...) asparagine) is linked at N195. 5 disulfide bridges follow: C199–C232, C215–C244, C344–C357, C421–C455, and C436–C467.

In terms of assembly, may form a complex with OS9, HSPA5, SYVN1, and SEL1L with which it interacts directly. Interacts (via PRKCSH 2 domain) with KREMEN2 (when glycosylated). Interacts with HSPA5. Isoform 1 and isoform 2 are N-glycosylated.

It is found in the endoplasmic reticulum lumen. In terms of biological role, probable lectin that binds selectively to improperly folded lumenal proteins. May function in endoplasmic reticulum quality control and endoplasmic reticulum-associated degradation (ERAD) of both non-glycosylated proteins and glycoproteins. In Homo sapiens (Human), this protein is Endoplasmic reticulum lectin 1 (ERLEC1).